Here is a 428-residue protein sequence, read N- to C-terminus: GTPase Obg (428 aa).

The 158-residue stretch at 1 to 158 (MFVDQVKVYV…RYIVLELKVL (158 aa)) folds into the Obg domain. A disordered region spans residues 117–143 (ARGGRGGRGNSRFATPANPAPQLSENG). Positions 159 to 329 (ADVGLVGFPS…LLFEVANQLE (171 aa)) constitute an OBG-type G domain. Residues 165 to 172 (GFPSVGKS), 190 to 194 (FTTLV), 212 to 215 (DLPG), 282 to 285 (NKMD), and 310 to 312 (SAV) contribute to the GTP site. 2 residues coordinate Mg(2+): serine 172 and threonine 192. The 79-residue stretch at 350–428 (TMENEEVPFN…LLEFEFEFID (79 aa)) folds into the OCT domain.

The protein belongs to the TRAFAC class OBG-HflX-like GTPase superfamily. OBG GTPase family. Monomer. Interacts with TasA (AC P54507) in pull-down experiments. Mg(2+) is required as a cofactor.

The protein localises to the cytoplasm. With respect to regulation, inhibited by GDP; less than 20 uM ppGpp stimulates the GTPase, while higher concentrations inhibit. Its function is as follows. Necessary for the transition from vegetative growth to stage 0 or stage II of sporulation, but sporulation subsequent to these stages is unaffected at 45 degrees Celsius. This ts effect is probably due solely to the E-79 mutation. Required for expression of early sporulation genes, further suggesting a role in the induction of sporulation. Depletion effects on sporulation can be partially suppressed by missense mutations in spo0A. Strains depleted for obg stop growing after about 3 hours and do not induce the sigma-B factor following ethanol stress. It cofractionates with the ribosome and upstream stress response regulators RsbR, RsbS and RsbT in size fractionation columns, suggesting the ribosome might serve as a possible mediator of the activity of obg and the stress induction of sigma-B. In glycerol gradients partially associates with ribosomes; this is stabilized by a nonhydrolyzable GTP-analog and to a lesser extent GTP and GDP. An essential GTPase which binds GTP, GDP and possibly (p)ppGpp with moderate affinity, with high nucleotide exchange rates and a fairly low GTP hydrolysis rate. Plays a role in control of the cell cycle, stress response, ribosome biogenesis and in those bacteria that undergo differentiation, in morphogenesis control. This is GTPase Obg from Bacillus subtilis (strain 168).